The sequence spans 313 residues: NADH-ubiquinone oxidoreductase chain 1 (313 aa).

The next 8 helical transmembrane spans lie at 2–22, 72–92, 102–122, 148–168, 173–193, 222–244, 249–268, and 293–313; these read ILSV…VAFL, VFFF…MPVP, FAVL…MASG, LGLI…AQFF, EVML…STVA, FALF…ALLF, FSLL…YLWF, and LGLL…GGGL.

It belongs to the complex I subunit 1 family.

The protein localises to the mitochondrion inner membrane. The catalysed reaction is a ubiquinone + NADH + 5 H(+)(in) = a ubiquinol + NAD(+) + 4 H(+)(out). Its function is as follows. Core subunit of the mitochondrial membrane respiratory chain NADH dehydrogenase (Complex I) that is believed to belong to the minimal assembly required for catalysis. Complex I functions in the transfer of electrons from NADH to the respiratory chain. The immediate electron acceptor for the enzyme is believed to be ubiquinone. This Branchiostoma lanceolatum (Common lancelet) protein is NADH-ubiquinone oxidoreductase chain 1 (ND1).